Consider the following 162-residue polypeptide: Endoribonuclease YbeY (162 aa).

Residues histidine 127, histidine 131, and histidine 137 each coordinate Zn(2+).

Belongs to the endoribonuclease YbeY family. The cofactor is Zn(2+).

The protein resides in the cytoplasm. Single strand-specific metallo-endoribonuclease involved in late-stage 70S ribosome quality control and in maturation of the 3' terminus of the 16S rRNA. This chain is Endoribonuclease YbeY, found in Acetivibrio thermocellus (strain ATCC 27405 / DSM 1237 / JCM 9322 / NBRC 103400 / NCIMB 10682 / NRRL B-4536 / VPI 7372) (Clostridium thermocellum).